The primary structure comprises 282 residues: Stress response regulator protein 1 (282 aa).

2 stretches are compositionally biased toward low complexity: residues 12 to 30 (NLSR…HSST) and 41 to 58 (SLDT…SNNN). Disordered regions lie at residues 12–31 (NLSR…SSTV), 41–84 (SLDT…DDED), and 112–139 (LTPF…TTVV). A compositionally biased stretch (polar residues) spans 66 to 77 (SDYNSYTHNQYY). Low complexity predominate over residues 125-139 (SIISSKSSNKSTTVV). Positions 155-273 (SFLIVDDNII…LDFMANSIDD (119 aa)) constitute a Response regulatory domain. Asp206 carries the post-translational modification 4-aspartylphosphate.

Functionally, required for stress adaptation, morphogenesis and virulence. In Candida albicans (strain WO-1) (Yeast), this protein is Stress response regulator protein 1 (SRR1).